A 359-amino-acid chain; its full sequence is Probable dual-specificity RNA methyltransferase RlmN (359 aa).

Residue Glu-100 is the Proton acceptor of the active site. A Radical SAM core domain is found at 106–340; sequence TDKRLTVCVS…VSVRASRGRD (235 aa). Cysteines 113 and 345 form a disulfide. [4Fe-4S] cluster-binding residues include Cys-120, Cys-124, and Cys-127. S-adenosyl-L-methionine contacts are provided by residues 167 to 168, Ser-197, 226 to 228, and Asn-302; these read GE and SLH. Residue Cys-345 is the S-methylcysteine intermediate of the active site.

Belongs to the radical SAM superfamily. RlmN family. It depends on [4Fe-4S] cluster as a cofactor.

The protein resides in the cytoplasm. It catalyses the reaction adenosine(2503) in 23S rRNA + 2 reduced [2Fe-2S]-[ferredoxin] + 2 S-adenosyl-L-methionine = 2-methyladenosine(2503) in 23S rRNA + 5'-deoxyadenosine + L-methionine + 2 oxidized [2Fe-2S]-[ferredoxin] + S-adenosyl-L-homocysteine. The enzyme catalyses adenosine(37) in tRNA + 2 reduced [2Fe-2S]-[ferredoxin] + 2 S-adenosyl-L-methionine = 2-methyladenosine(37) in tRNA + 5'-deoxyadenosine + L-methionine + 2 oxidized [2Fe-2S]-[ferredoxin] + S-adenosyl-L-homocysteine. Functionally, specifically methylates position 2 of adenine 2503 in 23S rRNA and position 2 of adenine 37 in tRNAs. The chain is Probable dual-specificity RNA methyltransferase RlmN from Prochlorococcus marinus (strain NATL1A).